Consider the following 1238-residue polypeptide: Cullin-associated NEDD8-dissociated protein 1 (1238 aa).

HEAT repeat units follow at residues 41–78 (TYENKIVTKLLALTADSANNVQENVVKCLGLLIKRVKD), 126–167 (LVIK…KYGS), 171–208 (GDLENIQKVVLPKLNATRPAIRKRAILCLANIAFPSPD), 210–247 (LFNSLLDYIIKSIEEAKKPDHISTLIQAIGAICKSSGY), and 251–292 (KYLP…KCQK). Positions 315–354 (YSDDGEGEEDGDEEEEEMETSGDNDEEQEEEEEEEDLSDD) are disordered. 9 HEAT repeats span residues 382-419 (ELYQKVAPVLYNRFKEREENVRLDIFTTFVLLLKQLNK), 432-469 (QQVPKLVQSISKSLIDKSIRTRVGAIALLKELVMIIPG), 603-641 (EIQSELQPCLSILLERLDNELTRVVTVKVLSRIINSSIN), 646-683 (SILPSAIKLLSTFLRKNNRVLKQSSLIALNDIVKVCPN), 688-725 (SLLTGILTEMATLINESDLQITHLAFVFIQNLLKNYSE), 853-890 (HENENLQESVYKTFEANNEEIKQVAALCLGDIAVCSLQ), 933-966 (PFLQSILPLLFDNCVNEEEGTRNIVAECLGKLSM), 967-1004 (IEPNEIIPKLVEKIKSPSPLERSTIVTSIKFSIMENKE), and 1008-1045 (QYLAPNISQFLSLLHDGDLIVRRSALLSLNYIAHNKPN).

Belongs to the CAND family.

The protein localises to the nucleus. Its function is as follows. Key assembly factor of SCF (SKP1-CUL1-F-box protein) E3 ubiquitin ligase complexes that promotes the exchange of the substrate-recognition F-box subunit in SCF complexes, thereby playing a key role in the cellular repertoire of SCF complexes. Acts as a F-box protein exchange factor. The sequence is that of Cullin-associated NEDD8-dissociated protein 1 (cand1) from Dictyostelium discoideum (Social amoeba).